Here is a 312-residue protein sequence, read N- to C-terminus: Oxidoreductase NAD-binding domain-containing protein 1 (312 aa).

Positions M1–G17 are cleaved as a signal peptide. Residues H50–S186 enclose the FAD-binding FR-type domain. G178–P183 lines the NAD(+) pocket.

The sequence is that of Oxidoreductase NAD-binding domain-containing protein 1 (OXNAD1) from Homo sapiens (Human).